A 302-amino-acid chain; its full sequence is Thioredoxin-like protein CDSP32, chloroplastic (302 aa).

A chloroplast-targeting transit peptide spans 1–56; sequence MATVANFLAKPISTVVPRPSSAVASTSSFVFFNHKTNPLFRRKNLPKRLFSAVKIK. Positions 163–298 constitute a Thioredoxin domain; the sequence is HEEEGIEPDQ…IGEILRYSGV (136 aa). Active-site nucleophile residues include Cys-219 and Cys-222. Residues Cys-219 and Cys-222 are joined by a disulfide bond.

This sequence belongs to the thioredoxin family. In terms of assembly, interacts with the plastidial peroxiredoxin BAS1.

The protein resides in the plastid. The protein localises to the chloroplast stroma. Probable thiol-disulfide oxidoreductase involved in resistance to oxidative stress. May participate in the reduction of alkyl hydroperoxides derived from oxidative stress by acting as a physiological electron donor to the BAS1 peroxiredoxin. May regenerate methionine sulfoxide reductase B1 (MSRB1) activity through sulfenic acid reduction. The polypeptide is Thioredoxin-like protein CDSP32, chloroplastic (CDSP32) (Arabidopsis thaliana (Mouse-ear cress)).